A 302-amino-acid chain; its full sequence is Sulfate adenylyltransferase subunit 2 (302 aa).

The protein belongs to the PAPS reductase family. CysD subfamily. Heterodimer composed of CysD, the smaller subunit, and CysN.

It catalyses the reaction sulfate + ATP + H(+) = adenosine 5'-phosphosulfate + diphosphate. It functions in the pathway sulfur metabolism; hydrogen sulfide biosynthesis; sulfite from sulfate: step 1/3. In terms of biological role, with CysN forms the ATP sulfurylase (ATPS) that catalyzes the adenylation of sulfate producing adenosine 5'-phosphosulfate (APS) and diphosphate, the first enzymatic step in sulfur assimilation pathway. APS synthesis involves the formation of a high-energy phosphoric-sulfuric acid anhydride bond driven by GTP hydrolysis by CysN coupled to ATP hydrolysis by CysD. The polypeptide is Sulfate adenylyltransferase subunit 2 (Serratia proteamaculans (strain 568)).